A 490-amino-acid chain; its full sequence is Homoserine O-acetyltransferase (490 aa).

The 309-residue stretch at 47 to 355 (NAILVCHALT…DYGHDAFLLE (309 aa)) folds into the AB hydrolase-1 domain. The active-site Nucleophile is the serine 152. Arginine 222 is a substrate binding site. Active-site residues include aspartate 316 and histidine 349. Aspartate 350 lines the substrate pocket. 2 consecutive CBS domains span residues 376–436 (MKTD…LEDV) and 437–490 (MTKD…ISSY).

This sequence belongs to the AB hydrolase superfamily. MetX family. As to quaternary structure, homodimer.

Its subcellular location is the cytoplasm. It carries out the reaction L-homoserine + acetyl-CoA = O-acetyl-L-homoserine + CoA. It functions in the pathway amino-acid biosynthesis; L-methionine biosynthesis via de novo pathway; O-acetyl-L-homoserine from L-homoserine: step 1/1. Functionally, transfers an acetyl group from acetyl-CoA to L-homoserine, forming acetyl-L-homoserine. This chain is Homoserine O-acetyltransferase, found in Methanobrevibacter ruminantium (strain ATCC 35063 / DSM 1093 / JCM 13430 / OCM 146 / M1) (Methanobacterium ruminantium).